The primary structure comprises 328 residues: Gonadotropin-releasing hormone receptor (328 aa).

The Extracellular portion of the chain corresponds to 1-38; it reads MQDDTSSEQNPTHCSAINSSVPLVQGALPTLTLSGKIR. An N-linked (GlcNAc...) asparagine glycan is attached at asparagine 18. A helical transmembrane segment spans residues 39 to 59; sequence VTVTFFLFLVSTTLNASFLLK. The Cytoplasmic portion of the chain corresponds to 60-84; sequence LQKWTQKKEKGKKLSRMKVLLKHLT. Residues 85 to 105 form a helical membrane-spanning segment; that stretch reads LANLLETLIVMPLDGMWNITV. Residues 106–115 are Extracellular-facing; that stretch reads QWYAGELLCK. The cysteines at positions 114 and 196 are disulfide-linked. A helical membrane pass occupies residues 116-136; that stretch reads ILSYLKLFSMYAPAFMMVVIS. Residues 137–160 are Cytoplasmic-facing; that stretch reads LDRSMAITRPLPVQSNRKLEQSMT. Residues 161-181 form a helical membrane-spanning segment; it reads GLAWGLSSVLAGPQLYIFKMI. The Extracellular segment spans residues 182–208; that stretch reads HLENGPGQTEVFSQCVTHCSFPQWWHQ. A helical transmembrane segment spans residues 209–229; the sequence is AFYNFFTFICLFIIPLLIMLI. The Cytoplasmic portion of the chain corresponds to 230–271; the sequence is CNAKIIFTLTQVLQQDSNKLQLNQSKNNIPRARLRTLKMTVA. Residues 272 to 292 traverse the membrane as a helical segment; sequence FAASFIVCWTPYYVLGLWYWF. Residues 293-306 are Extracellular-facing; it reads DPGMLHRMSEPVNH. Residues 307 to 327 form a helical membrane-spanning segment; sequence FFFLFAFLNPCFDPLIYGYFS. Leucine 328 is a topological domain (cytoplasmic).

This sequence belongs to the G-protein coupled receptor 1 family.

The protein localises to the cell membrane. Functionally, receptor for gonadotropin releasing hormone (GnRH) that mediates the action of GnRH to stimulate the secretion of the gonadotropic hormones luteinizing hormone (LH) and follicle-stimulating hormone (FSH). This receptor mediates its action by association with G-proteins that activate a phosphatidylinositol-calcium second messenger system. The chain is Gonadotropin-releasing hormone receptor (GNRHR) from Cavia porcellus (Guinea pig).